The chain runs to 956 residues: Translation initiation factor IF-2 (956 aa).

A disordered region spans residues 68-357; it reads APEAAAPKAP…GVSVPRGDGN (290 aa). Composition is skewed to low complexity over residues 86–123, 141–156, 164–175, and 212–235; these read AKPAEAQASVKPVETQAPATPAAAKAAATPVAPAAPAV, PGNNPFATSQGMPRAG, PAAAPASGAGRP, and GPRPAAGSGGPRPAAGSGGPRPAA. Gly residues-rich tracts occupy residues 236–257 and 276–324; these read GSGGPRPGAGSGASRPGGGGGN and RGAG…GAGR. Residues 325-334 are compositionally biased toward basic residues; the sequence is GKQRKSKRAK. Positions 449–620 constitute a tr-type G domain; it reads ARPPVVTVMG…AVMLTADAAL (172 aa). The segment at 458–465 is G1; it reads GHVDHGKT. 458–465 serves as a coordination point for GTP; it reads GHVDHGKT. Residues 483–487 form a G2 region; sequence GITQH. A G3 region spans residues 508–511; the sequence is DTPG. GTP is bound by residues 508-512 and 562-565; these read DTPGH and NKID. Residues 562–565 are G4; it reads NKID. The interval 598-600 is G5; it reads SAR.

The protein belongs to the TRAFAC class translation factor GTPase superfamily. Classic translation factor GTPase family. IF-2 subfamily.

The protein resides in the cytoplasm. One of the essential components for the initiation of protein synthesis. Protects formylmethionyl-tRNA from spontaneous hydrolysis and promotes its binding to the 30S ribosomal subunits. Also involved in the hydrolysis of GTP during the formation of the 70S ribosomal complex. The chain is Translation initiation factor IF-2 from Renibacterium salmoninarum (strain ATCC 33209 / DSM 20767 / JCM 11484 / NBRC 15589 / NCIMB 2235).